We begin with the raw amino-acid sequence, 807 residues long: Maternal DNA replication licensing factor mcm3 (807 aa).

The MCM domain maps to 295-502 (IFEHLSKSLA…NDQEIADHVL (208 aa)). 345 to 352 (GDPSVAKS) provides a ligand contact to ATP. Positions 477-480 (SRFD) match the Arginine finger motif. Basic and acidic residues predominate over residues 664–673 (KTDKDLHDEN). A disordered region spans residues 664–741 (KTDKDLHDEN…QDGKRSLSQN (78 aa)). Positions 707–723 (FSEQDSSLNENLSQSLR) are enriched in polar residues. A compositionally biased stretch (basic and acidic residues) spans 727-741 (KKAESQDGKRSLSQN).

This sequence belongs to the MCM family. As to quaternary structure, component of the mcm2-7 complex (RLF-M). The complex forms a toroidal hexameric ring with the proposed subunit order mcm2-mcm6-mcm4-mcm7-mcm3-mcm5. The heterodimer of mmcm3/mcm5 interacts with mcm4, mmcm6, mcm7 and weakly with mcm2. Interacts with mcm7, though this interaction may not be direct, and remains in a complex with mcm7 throughout the cell cycle. Component of the CMG helicase complex, composed of the mcm2-7 complex, the GINS complex and cdc45.

The protein localises to the nucleus. It is found in the chromosome. It catalyses the reaction ATP + H2O = ADP + phosphate + H(+). Acts as a component of the mcm2-7 complex (mcm complex) which is the putative replicative helicase essential for 'once per cell cycle' DNA replication initiation and elongation in eukaryotic cells. The active ATPase sites in the mcm2-7 ring are formed through the interaction surfaces of two neighboring subunits such that a critical structure of a conserved arginine finger motif is provided in trans relative to the ATP-binding site of the Walker A box of the adjacent subunit. The six ATPase active sites, however, are likely to contribute differentially to the complex helicase activity. The existence of maternal and zygotic forms of mcm3 and mcm6 suggests that specific forms of mcm2-7 complexes may be used during different stages of development. The sequence is that of Maternal DNA replication licensing factor mcm3 (mmcm3) from Xenopus laevis (African clawed frog).